The following is a 389-amino-acid chain: Chalcone synthase 1 (389 aa).

Cys-164 is an active-site residue.

The protein belongs to the thiolase-like superfamily. Chalcone/stilbene synthases family.

It carries out the reaction (E)-4-coumaroyl-CoA + 3 malonyl-CoA + 3 H(+) = 2',4,4',6'-tetrahydroxychalcone + 3 CO2 + 4 CoA. It participates in secondary metabolite biosynthesis; flavonoid biosynthesis. The primary product of this enzyme is 4,2',4',6'-tetrahydroxychalcone (also termed naringenin-chalcone or chalcone) which can under specific conditions spontaneously isomerize into naringenin. This Daucus carota (Wild carrot) protein is Chalcone synthase 1 (CHS1).